The primary structure comprises 406 residues: Acetate kinase (406 aa).

A Mg(2+)-binding site is contributed by N7. K14 contributes to the ATP binding site. A substrate-binding site is contributed by R90. D147 serves as the catalytic Proton donor/acceptor. Residues 207–211 (HLGNG), 283–285 (DMR), and 331–335 (GVGEN) contribute to the ATP site. E385 serves as a coordination point for Mg(2+).

This sequence belongs to the acetokinase family. As to quaternary structure, homodimer. Requires Mg(2+) as cofactor. It depends on Mn(2+) as a cofactor.

Its subcellular location is the cytoplasm. It carries out the reaction acetate + ATP = acetyl phosphate + ADP. It functions in the pathway metabolic intermediate biosynthesis; acetyl-CoA biosynthesis; acetyl-CoA from acetate: step 1/2. Functionally, catalyzes the formation of acetyl phosphate from acetate and ATP. Can also catalyze the reverse reaction. This Fervidobacterium nodosum (strain ATCC 35602 / DSM 5306 / Rt17-B1) protein is Acetate kinase.